We begin with the raw amino-acid sequence, 360 residues long: Popeye domain-containing protein 1 (360 aa).

At 1–48 (MNYTESSPLRESTAIGFTPELESIIPVPSNKTTCENWREIHHLVFHVA) the chain is on the extracellular side. N-linked (GlcNAc...) asparagine glycans are attached at residues N2 and N30. The helical transmembrane segment at 49-69 (NICFAVGLVIPTTLHLHMIFL) threads the bilayer. R70 is a topological domain (cytoplasmic). The helical transmembrane segment at 71–91 (GMLTLGCTLYIVWATLYRCAL) threads the bilayer. Position 92 (D92) is a topological domain, extracellular. The chain crosses the membrane as a helical span at residues 93–113 (IMIWNSVFLGVNILHLSYLLY). Residues 93–115 (IMIWNSVFLGVNILHLSYLLYKK) form a required for interaction with CAV3 region. At 114–360 (KKRPVKIEKE…PNTLKVHQLP (247 aa)) the chain is on the cytoplasmic side. Positions 136 to 186 (RVPPDLFRRLTGQFCMIQTLKKGQTYAAEDKTSVDDRLSILLKGKMKVSYR) are required for interaction with KCNK2. A phosphoserine mark is found at S295 and S318. A disordered region spans residues 317 to 360 (SSLHVSSPHQRASAKMKPIEEGAEDDDDVFEPASPNTLKVHQLP). Residues 337-346 (EGAEDDDDVF) show a composition bias toward acidic residues. The span at 350–360 (SPNTLKVHQLP) shows a compositional bias: polar residues.

Belongs to the popeye family. In terms of assembly, homodimer. Homodimerization requires the C-terminus cytoplasmic region. Interacts (via the C-terminus cytoplasmic tail) with TJP1. Interacts (via the C-terminus cytoplasmic tail) with ARHGEF25/GEFT (via the DH domain). Interacts (via the C-terminus cytoplasmic tail) with VAMP3. Interacts with KCNK2; the interaction enhances KCNK2 surface expression and is inhibited by cAMP. Interacts with CAV3. In terms of tissue distribution, expressed in epithelial cells (at protein level). Expressed in fetal and adult heart and skeletal muscle.

Its subcellular location is the lateral cell membrane. It is found in the cell junction. The protein resides in the tight junction. The protein localises to the membrane. It localises to the cell membrane. Its subcellular location is the sarcolemma. It is found in the caveola. In terms of biological role, cell adhesion molecule involved in the establishment and/or maintenance of cell integrity. Involved in the formation and regulation of the tight junction (TJ) paracellular permeability barrier in epithelial cells. Plays a role in VAMP3-mediated vesicular transport and recycling of different receptor molecules through its interaction with VAMP3. Plays a role in the regulation of cell shape and movement by modulating the Rho-family GTPase activity through its interaction with ARHGEF25/GEFT. Induces primordial adhesive contact and aggregation of epithelial cells in a Ca(2+)-independent manner. Also involved in striated muscle regeneration and repair and in the regulation of cell spreading. Important for the maintenance of cardiac function. Plays a regulatory function in heart rate dynamics mediated, at least in part, through cAMP-binding and, probably, by increasing cell surface expression of the potassium channel KCNK2 and enhancing current density. Is also a caveolae-associated protein important for the preservation of caveolae structural and functional integrity as well as for heart protection against ischemia injury. This Homo sapiens (Human) protein is Popeye domain-containing protein 1.